Consider the following 78-residue polypeptide: Large ribosomal subunit protein eL20 (78 aa).

The protein belongs to the eukaryotic ribosomal protein eL20 family. As to quaternary structure, part of the 50S ribosomal subunit. Binds 23S rRNA.

The sequence is that of Large ribosomal subunit protein eL20 from Pyrobaculum arsenaticum (strain DSM 13514 / JCM 11321 / PZ6).